The primary structure comprises 133 residues: ATP synthase epsilon chain (133 aa).

It belongs to the ATPase epsilon chain family. F-type ATPases have 2 components, CF(1) - the catalytic core - and CF(0) - the membrane proton channel. CF(1) has five subunits: alpha(3), beta(3), gamma(1), delta(1), epsilon(1). CF(0) has three main subunits: a, b and c.

It localises to the cell inner membrane. Produces ATP from ADP in the presence of a proton gradient across the membrane. This Paramagnetospirillum magneticum (strain ATCC 700264 / AMB-1) (Magnetospirillum magneticum) protein is ATP synthase epsilon chain.